A 723-amino-acid polypeptide reads, in one-letter code: MSMFNKIVKEFQWGQHTVRMETGEIARQAGGAVLVDVEDTVVLATVVAAKNPKPGQDFFPLTVDYIEKTYAAGKIPGGFFKREGRPSENETLTSRLIDRPLRPLFPEGFYNDVQVVIHVVSLNPEVPADIPALIGASAALAVSGIPFNGPVGAARVGYKDGQYLLNPTRSQLATSDLDLVVAGTERAVLMVESEANQLSEDVMLGAVVYGHEQMQIAINAIHELVREGGKPEWDWAPAAKNEPLIAKVTEVALPLLQEAYQLRQKSARSQKLKEVNANVAAALAAAGVEADKVEVGNIMFDLEAKIVRGQVLAGEPRIDGRDTRTVRPIEIRSSVLPRAHGSALFTRGETQALVVATLGTKSDEQIIDALAGEYRDRFMLHYNMPPFATGETGRVGSPKRREIGHGRLAKRALIPVLPKDDEFAYTIRLVSEITESNGSSSMASVCGGCLALMDAGVPVKAHVAGVAMGLILEGNKFAVLTDILGDEDHLGDMDFKVAGTDNGITALQMDIKVQGITKEIMQVALAQAREGRLHILHKMQEAMGHARTELSAHAPRMITMKIHPDKIREVIGKGGSTIQALTKETGTTIDIQEDGTITIASTSTDGMAEAKRRIEGITAEAEVGKIYAGTVLKLLDFGAIVNILPGKDGLLHISEIVNERVKDIKDWLKEGQQVRVKLIQADEKGRLRLSLKAALTEEGGSISPINAGEAAAPAAPAEGSEQQ.

Mg(2+) is bound by residues D488 and D494. The 60-residue stretch at 555 to 614 (PRMITMKIHPDKIREVIGKGGSTIQALTKETGTTIDIQEDGTITIASTSTDGMAEAKRRI) folds into the KH domain. The S1 motif domain occupies 624-692 (GKIYAGTVLK…EKGRLRLSLK (69 aa)). Residues 701 to 723 (SISPINAGEAAAPAAPAEGSEQQ) are disordered. Residues 707–723 (AGEAAAPAAPAEGSEQQ) are compositionally biased toward low complexity.

It belongs to the polyribonucleotide nucleotidyltransferase family. Requires Mg(2+) as cofactor.

The protein resides in the cytoplasm. The catalysed reaction is RNA(n+1) + phosphate = RNA(n) + a ribonucleoside 5'-diphosphate. Involved in mRNA degradation. Catalyzes the phosphorolysis of single-stranded polyribonucleotides processively in the 3'- to 5'-direction. The chain is Polyribonucleotide nucleotidyltransferase from Cupriavidus necator (strain ATCC 17699 / DSM 428 / KCTC 22496 / NCIMB 10442 / H16 / Stanier 337) (Ralstonia eutropha).